We begin with the raw amino-acid sequence, 360 residues long: Phosphoserine aminotransferase (360 aa).

Arg42 contributes to the L-glutamate binding site. Residues 76 to 77, Trp102, Thr152, Asp172, and Gln195 contribute to the pyridoxal 5'-phosphate site; that span reads AS. Lys196 is modified (N6-(pyridoxal phosphate)lysine). 237-238 provides a ligand contact to pyridoxal 5'-phosphate; the sequence is NT.

The protein belongs to the class-V pyridoxal-phosphate-dependent aminotransferase family. SerC subfamily. Homodimer. The cofactor is pyridoxal 5'-phosphate.

It is found in the cytoplasm. The catalysed reaction is O-phospho-L-serine + 2-oxoglutarate = 3-phosphooxypyruvate + L-glutamate. It carries out the reaction 4-(phosphooxy)-L-threonine + 2-oxoglutarate = (R)-3-hydroxy-2-oxo-4-phosphooxybutanoate + L-glutamate. The protein operates within amino-acid biosynthesis; L-serine biosynthesis; L-serine from 3-phospho-D-glycerate: step 2/3. Functionally, catalyzes the reversible conversion of 3-phosphohydroxypyruvate to phosphoserine and of 3-hydroxy-2-oxo-4-phosphonooxybutanoate to phosphohydroxythreonine. The polypeptide is Phosphoserine aminotransferase (Bacillus cereus (strain ZK / E33L)).